A 189-amino-acid polypeptide reads, in one-letter code: Ribosome hibernation promotion factor (189 aa).

This sequence belongs to the HPF/YfiA ribosome-associated protein family. Long HPF subfamily. In terms of assembly, interacts with 100S ribosomes.

Its subcellular location is the cytoplasm. Functionally, required for dimerization of active 70S ribosomes into 100S ribosomes in stationary phase; 100S ribosomes are translationally inactive and sometimes present during exponential growth. This is Ribosome hibernation promotion factor from Staphylococcus epidermidis (strain ATCC 35984 / DSM 28319 / BCRC 17069 / CCUG 31568 / BM 3577 / RP62A).